Here is an 832-residue protein sequence, read N- to C-terminus: Cytosolic carboxypeptidase-like protein 5 (832 aa).

Residues 27 to 50 (TVPSDGEGVGGAATAPTSGSASSP) are disordered. Low complexity predominate over residues 38–50 (AATAPTSGSASSP). A Peptidase M14 domain is found at 157-571 (YPFSYSDCQD…ALAIAALDMA (415 aa)). The Zn(2+) site is built by histidine 252 and glutamate 255. Over residues 343 to 354 (NSKNPSNQQPSS) the composition is skewed to low complexity. 2 disordered regions span residues 343–362 (NSKNPSNQQPSSLHLPPEVP) and 376–402 (LHLGQSPDGENHDRWTETEPTEEKTDP). Positions 384-401 (GENHDRWTETEPTEEKTD) are enriched in basic and acidic residues. Histidine 435 contacts Zn(2+). Residue glutamate 517 is the Proton donor/acceptor of the active site. Positions 606-752 (STANVGLNKK…ASPTSSRNMG (147 aa)) are disordered. The segment covering 621–636 (PPKSNNGLPVSCSENA) has biased composition (polar residues). Positions 644-654 (STGTSTGGSSS) are enriched in low complexity. Over residues 655–666 (QQNSPQMKNSPS) the composition is skewed to polar residues. A compositionally biased stretch (low complexity) spans 708–752 (QQQQQQQQQQQQQQQQPLNQRSTTSSLAPSPTLASASPTSSRNMG).

It belongs to the peptidase M14 family. Requires Zn(2+) as cofactor.

It is found in the cytoplasm. It localises to the cytosol. Its subcellular location is the nucleus. The protein localises to the cytoskeleton. The protein resides in the spindle. It is found in the midbody. The enzyme catalyses gamma-L-glutamyl-L-glutamyl-[protein] + H2O = L-glutamyl-[protein] + L-glutamate. It catalyses the reaction (L-glutamyl)(n+1)-gamma-L-glutamyl-L-glutamyl-[protein] + H2O = (L-glutamyl)(n)-gamma-L-glutamyl-L-glutamyl-[protein] + L-glutamate. The catalysed reaction is C-terminal L-alpha-aminoacyl-L-glutamyl-[tubulin] + H2O = C-terminal L-alpha-aminoacyl-[tubulin] + L-glutamate. It carries out the reaction C-terminal L-alpha-aminoacyl-L-glutamyl-L-glutamyl-[tubulin] + H2O = C-terminal L-alpha-aminoacyl-L-glutamyl-[tubulin] + L-glutamate. In terms of biological role, metallocarboxypeptidase that mediates deglutamylation of tubulin and non-tubulin target proteins. Catalyzes the removal of polyglutamate side chains present on the gamma-carboxyl group of glutamate residues within the C-terminal tail of alpha- and beta-tubulin. Cleaves alpha- and gamma-linked polyglutamate tubulin side-chain, as well as the branching point glutamate. Also catalyzes the removal of alpha-linked glutamate residues from the carboxy-terminus of alpha-tubulin. Mediates deglutamylation of nucleotidyltransferase CGAS, leading to CGAS antiviral defense response activation. This Rattus norvegicus (Rat) protein is Cytosolic carboxypeptidase-like protein 5 (Agbl5).